The sequence spans 2287 residues: Serine/threonine-protein kinase MEC1 (2287 aa).

An FAT domain is found at 1310 to 1864 (TLAKKSLETD…LWYISILLNS (555 aa)). The PI3K/PI4K catalytic domain maps to 1968 to 2271 (FSSQYMVFNS…QVEALTQESC (304 aa)). The interval 1974-1980 (VFNSLKK) is G-loop. Residues 2140 to 2148 (GLGDRHCEN) form a catalytic loop region. The interval 2160-2184 (HVDFDCLFEKGKKLPVPEIVPFRLT) is activation loop. Positions 2255–2287 (LALSVSGQVEALTQESCSVENLSKMYIGWLPFW) constitute an FATC domain.

The protein belongs to the PI3/PI4-kinase family. ATM subfamily.

Its subcellular location is the nucleus. The enzyme catalyses L-seryl-[protein] + ATP = O-phospho-L-seryl-[protein] + ADP + H(+). It catalyses the reaction L-threonyl-[protein] + ATP = O-phospho-L-threonyl-[protein] + ADP + H(+). Its function is as follows. Serine/threonine protein kinase which activates checkpoint signaling upon genotoxic stresses such as ionizing radiation (IR), ultraviolet light (UV), or DNA replication stalling, thereby acting as a DNA damage sensor. Recognizes the substrate consensus sequence [ST]-Q. Recruited to DNA lesions in order to initiate the DNA repair by homologous recombination. Phosphorylates histone H2A to form H2AS128ph (gamma-H2A) at sites of DNA damage, also involved in the regulation of DNA damage response mechanism. Required for cell growth and meiotic recombination. The protein is Serine/threonine-protein kinase MEC1 (MEC1) of Kluyveromyces lactis (strain ATCC 8585 / CBS 2359 / DSM 70799 / NBRC 1267 / NRRL Y-1140 / WM37) (Yeast).